The chain runs to 494 residues: MERWWFNSMLFKKEFECRCGLNKSTESLGSIENASEGDEPDIKDRTKNIQSWGGRDDSSYSKVDHLFVVKDIRNFISDDTFLVKDSNGDNFSIYFDIENQIFEIDNNHSFRSELKNTYWNSSYLNNGSTSEDTYYNHYMYDTQYSWNNHINSCIDSYLQSQIWIETSIVSGGDNYSDSYIYSSICGESRNNSEGEVSDIQTHVKGSDFTIIESSNDLDVTQKYRHLWVQCENCYGLNYKKFLKSKMNICEQCGYHLKMNSSERIELSIDPGTWDPMDEDMASLDPIEFHSEEEPYKDRIDSYQKKTGLTEAVQTGIGQLNGIPVAVGVMDFQFMGGSMGSVVGEKITRLIEYATKELLPLIIVCASGGARMQEGSLSLMQMAKISSALYDYQSNKKLFYVSILTSPTTGGVTASFGMLGDIIIAEPNAYIAFAGKRVIEQTLNTTVPEGSQAAEYLFQKGLFDLIVPRNLLKSVLSELFKFHAFVPLNQNETEH.

The 269-residue stretch at 226–494 folds into the CoA carboxyltransferase N-terminal domain; it reads LWVQCENCYG…VPLNQNETEH (269 aa). Zn(2+) is bound by residues Cys230, Cys233, Cys249, and Cys252. The C4-type zinc-finger motif lies at 230–252; the sequence is CENCYGLNYKKFLKSKMNICEQC.

Belongs to the AccD/PCCB family. Acetyl-CoA carboxylase is a heterohexamer composed of biotin carboxyl carrier protein, biotin carboxylase and 2 subunits each of ACCase subunit alpha and ACCase plastid-coded subunit beta (accD). Zn(2+) is required as a cofactor.

The protein resides in the plastid. The protein localises to the chloroplast stroma. The enzyme catalyses N(6)-carboxybiotinyl-L-lysyl-[protein] + acetyl-CoA = N(6)-biotinyl-L-lysyl-[protein] + malonyl-CoA. It functions in the pathway lipid metabolism; malonyl-CoA biosynthesis; malonyl-CoA from acetyl-CoA: step 1/1. In terms of biological role, component of the acetyl coenzyme A carboxylase (ACC) complex. Biotin carboxylase (BC) catalyzes the carboxylation of biotin on its carrier protein (BCCP) and then the CO(2) group is transferred by the transcarboxylase to acetyl-CoA to form malonyl-CoA. This chain is Acetyl-coenzyme A carboxylase carboxyl transferase subunit beta, chloroplastic, found in Coffea arabica (Arabian coffee).